The chain runs to 181 residues: MSSFHATTIFAVQHKGRSAMSGDGQVTFGQAVVMKHTARKVRKLFNGKVLAGFAGSVADAFTLFEKFEAKLEEYNGNLKRAAVELAKEWRSDKVLRKLEAMLIVMNQDTLLLVSGTGEVIEPDDGILAIGSGGNYALAAGRALKKHAGESMSASEIARAALETAGEICVYTNDQIILEELE.

Serine 2 is a catalytic residue. Residues glycine 165, cysteine 168, and threonine 171 each coordinate Na(+).

In terms of assembly, a double ring-shaped homohexamer of ClpQ is capped on each side by a ring-shaped ClpY homohexamer. The assembly of the ClpQ/ClpY complex is dependent on binding of ATP.

The protein resides in the cytoplasm. Functionally, protease subunit of a proteasome-like degradation complex. The polypeptide is ATP-dependent protease subunit ClpQ (clpQ) (Bacillus subtilis (strain 168)).